We begin with the raw amino-acid sequence, 137 residues long: Small ribosomal subunit protein uS12 (137 aa).

Residues 1-55 (MPTINQLVRKPRKSKTKQSDSPALNRGFNSKKKQFTNLNSPQKRGVCTRVGTMTP) form a disordered region. Asp102 carries the 3-methylthioaspartic acid modification. The tract at residues 118-137 (SGVDGRRQGRSLYGTKKPKN) is disordered.

Belongs to the universal ribosomal protein uS12 family. Part of the 30S ribosomal subunit. Contacts proteins S8 and S17. May interact with IF1 in the 30S initiation complex.

With S4 and S5 plays an important role in translational accuracy. Functionally, interacts with and stabilizes bases of the 16S rRNA that are involved in tRNA selection in the A site and with the mRNA backbone. Located at the interface of the 30S and 50S subunits, it traverses the body of the 30S subunit contacting proteins on the other side and probably holding the rRNA structure together. The combined cluster of proteins S8, S12 and S17 appears to hold together the shoulder and platform of the 30S subunit. The sequence is that of Small ribosomal subunit protein uS12 from Staphylococcus epidermidis (strain ATCC 35984 / DSM 28319 / BCRC 17069 / CCUG 31568 / BM 3577 / RP62A).